The following is a 255-amino-acid chain: Homeobox protein DLX-1 (255 aa).

A compositionally biased stretch (polar residues) spans 1–14 (MTMTTMPESLNSPV). Disordered regions lie at residues 1-38 (MTMT…MSHG) and 95-118 (SLAQ…EGGE). The span at 25 to 36 (PPNQQMSPSPMS) shows a compositional bias: low complexity. Residues 100–112 (RLEDPGADSEKST) are compositionally biased toward basic and acidic residues. Positions 128–187 (IRKPRTIYSSLQLQALNRRFQQTQYLALPERAELAASLGLTQTQVKIWFQNKRSKFKKLM) form a DNA-binding region, homeobox. Positions 204–233 (ALSAGSPPVPPGWNPNSSSGKGSGSSAGSY) are disordered. A compositionally biased stretch (low complexity) spans 217-232 (NPNSSSGKGSGSSAGS).

It belongs to the distal-less homeobox family. In terms of assembly, interacts with SMAD4 (via homeobox DNA-binding domain). Interacts (via homeobox DNA-binding domain) with POU4F2; this interaction suppresses DLX1-mediated transcriptional activity in postnatal retina and enhances retinal ganglion cell (RGC) differentiation. In terms of tissue distribution, expressed in a restricted region of the developing brain, within the diencephalon and the adjacent telencephalic regions.

The protein resides in the nucleus. Plays a role as a transcriptional activator or repressor. Inhibits several cytokine signaling pathways, such as TGFB1, activin-A/INHBA and BMP4 by interfering with the transcriptional stimulatory activity of transcription factors, such as MSX2, FAST2, SMAD2 and SMAD3 during hematopoietic cell differentiation. Plays a role in terminal differentiation of interneurons, such as amacrine and bipolar cells in the developing retina. Likely to play a regulatory role in the development of the ventral forebrain. May play a role in craniofacial patterning and morphogenesis and may be involved in the early development of diencephalic subdivisions. This Mus musculus (Mouse) protein is Homeobox protein DLX-1 (Dlx1).